The following is a 379-amino-acid chain: MFGMLRALKTHVEAPIVVATRAVSTNAEKLEEIRERLAKGPNFQDFVQNPENSRSEWEKYEGKLRREKGEEQRLRLPPWLKTTIPVGKNYAKIKAQMRELKLSTVCEEARCPNIGECWGGGEHGTQTATIMLMGDTCTRGCRFCSVKTARRPPPLDVNEPVNTATAIASWGLDYIVLTSVDRDDLPDGGSKHIAETVREIKARNSNIFVECLVPDFRGNLECVETIANSGLDVYAHNIETVEKLTPYVRDRRAHYRQTLQVLTEAKRFNPNLITKSSIMLGLGETDGEIECTLKDLREAGVDCVTLGQYMQPTNKHLKVIEYVTPEKFKHWEERGNALGFLYTASGPLVRSSYKAGEFFITSILENRKKRQNATEIAKE.

The [4Fe-4S] cluster site is built by Cys106, Cys111, Cys117, Cys137, Cys141, Cys144, and Ser352. The 220-residue stretch at 122–341 (EHGTQTATIM…EERGNALGFL (220 aa)) folds into the Radical SAM core domain.

The protein belongs to the radical SAM superfamily. Lipoyl synthase family. [4Fe-4S] cluster is required as a cofactor.

The protein localises to the mitochondrion. It catalyses the reaction [[Fe-S] cluster scaffold protein carrying a second [4Fe-4S](2+) cluster] + N(6)-octanoyl-L-lysyl-[protein] + 2 oxidized [2Fe-2S]-[ferredoxin] + 2 S-adenosyl-L-methionine + 4 H(+) = [[Fe-S] cluster scaffold protein] + N(6)-[(R)-dihydrolipoyl]-L-lysyl-[protein] + 4 Fe(3+) + 2 hydrogen sulfide + 2 5'-deoxyadenosine + 2 L-methionine + 2 reduced [2Fe-2S]-[ferredoxin]. It functions in the pathway protein modification; protein lipoylation via endogenous pathway; protein N(6)-(lipoyl)lysine from octanoyl-[acyl-carrier-protein]: step 2/2. In terms of biological role, catalyzes the radical-mediated insertion of two sulfur atoms into the C-6 and C-8 positions of the octanoyl moiety bound to the lipoyl domains of lipoate-dependent enzymes, thereby converting the octanoylated domains into lipoylated derivatives. In Drosophila erecta (Fruit fly), this protein is Lipoyl synthase, mitochondrial.